A 121-amino-acid polypeptide reads, in one-letter code: Small ribosomal subunit protein uS13 (121 aa).

Residues 91 to 121 (HRRGLPVRGQNSKNNARTRKGPRRTVANKKK) form a disordered region. Residues 106 to 121 (ARTRKGPRRTVANKKK) are compositionally biased toward basic residues.

Belongs to the universal ribosomal protein uS13 family. Part of the 30S ribosomal subunit. Forms a loose heterodimer with protein S19. Forms two bridges to the 50S subunit in the 70S ribosome.

In terms of biological role, located at the top of the head of the 30S subunit, it contacts several helices of the 16S rRNA. In the 70S ribosome it contacts the 23S rRNA (bridge B1a) and protein L5 of the 50S subunit (bridge B1b), connecting the 2 subunits; these bridges are implicated in subunit movement. Contacts the tRNAs in the A and P-sites. The polypeptide is Small ribosomal subunit protein uS13 (Bacillus cereus (strain ZK / E33L)).